The following is a 1395-amino-acid chain: G2/mitotic-specific cyclin-B3 (1395 aa).

Residues 1–59 are disordered; that stretch reads MLLPLPPQSSKPVPKKSQSSKIVPSHHDPSEKTGENCQTKISPSSLQESPSSLQGALKK. Residues 10–23 are compositionally biased toward low complexity; sequence SKPVPKKSQSSKIV. Residues 25–34 are compositionally biased toward basic and acidic residues; the sequence is SHHDPSEKTG. Over residues 42–54 the composition is skewed to low complexity; it reads SPSSLQESPSSLQ. Positions 60–68 match the D-box motif; sequence RSAFEDLTN. Disordered regions lie at residues 418–464 and 1074–1122; these read LSIK…PTEE and ATMT…DSSD. A compositionally biased stretch (basic and acidic residues) spans 419-431; that stretch reads SIKEKPSTEKESF. Residues 1082-1093 are compositionally biased toward low complexity; that stretch reads SRTTTESSACES.

This sequence belongs to the cyclin family. Cyclin AB subfamily. Interacts with CDK2 kinase. In terms of processing, ubiquitinated. Ubiquitination leads to its degradation during anaphase entry, after degradation of CCNB1. As to expression, testis specific. In testis, it is expressed in developing germ cells, but not in Leydig cells. Weakly or not expressed in other tissues.

The protein resides in the nucleus. Its function is as follows. Cyclins are positive regulatory subunits of the cyclin-dependent kinases (CDKs), and thereby play an essential role in the control of the cell cycle, notably via their destruction during cell division. Its tissue specificity suggest that it may be required during early meiotic prophase I. In Homo sapiens (Human), this protein is G2/mitotic-specific cyclin-B3 (CCNB3).